The sequence spans 494 residues: Cytochrome P450 2A3 (494 aa).

Ser131 is modified (phosphoserine). Residue Lys379 is modified to N6-acetyllysine. Cys439 provides a ligand contact to heme.

Belongs to the cytochrome P450 family. Heme is required as a cofactor. In terms of tissue distribution, lung.

The protein resides in the endoplasmic reticulum membrane. Its subcellular location is the microsome membrane. The catalysed reaction is an organic molecule + reduced [NADPH--hemoprotein reductase] + O2 = an alcohol + oxidized [NADPH--hemoprotein reductase] + H2O + H(+). In terms of biological role, cytochromes P450 are a group of heme-thiolate monooxygenases. In liver microsomes, this enzyme is involved in an NADPH-dependent electron transport pathway. It oxidizes a variety of structurally unrelated compounds, including steroids, fatty acids, and xenobiotics. The chain is Cytochrome P450 2A3 (Cyp2a3) from Rattus norvegicus (Rat).